We begin with the raw amino-acid sequence, 222 residues long: Sororin-like protein (222 aa).

The tract at residues 1–189 (MEAPRSVGGR…VKQEKEDPVS (189 aa)) is disordered. The span at 24–33 (SRSSQQSSSS) shows a compositional bias: low complexity. A compositionally biased stretch (basic and acidic residues) spans 47-60 (RLVEQTTLKEKPKD). Over residues 88 to 105 (ADLASPASAPSRPQTSRS) the composition is skewed to low complexity. A Nuclear localization signal motif is present at residues 155-162 (GKKTRQAS). Over residues 167 to 179 (KTLKVAPKKRQRT) the composition is skewed to basic residues. Residues 192–214 (CQDYIEKQKAYFAEIDAFELPVE) form a C-terminal Sororin domain region.

The protein belongs to the sororin family.

It localises to the nucleus. In terms of biological role, regulator of sister chromatid cohesion in mitosis stabilizing cohesin complex association with chromatin. Antagonizes the action of WAPL proteins (WAPL1 and WAPL2) which stimulates cohesin dissociation from chromatin, particularly during somatic division in root cells and meiocytes during anaphase I. Required for centromeric sister chromatid cohesion during male meiosis (microsporogenesis). Cohesion ensures that chromosome partitioning is accurate in dividing cells and may play an important role in DNA repair. This Arabidopsis thaliana (Mouse-ear cress) protein is Sororin-like protein.